Consider the following 492-residue polypeptide: Uridine-cytidine kinase D (492 aa).

A disordered region spans residues Pro36–Arg56. Gly117–Thr124 serves as a coordination point for ATP. Positions Glu290–Lys460 constitute a CYTH domain. The span at Pro468–Leu483 shows a compositional bias: low complexity. The disordered stretch occupies residues Pro468–Leu492.

The protein belongs to the uridine kinase family.

The enzyme catalyses uridine + ATP = UMP + ADP + H(+). The catalysed reaction is cytidine + ATP = CMP + ADP + H(+). It functions in the pathway pyrimidine metabolism; CTP biosynthesis via salvage pathway; CTP from cytidine: step 1/3. The protein operates within pyrimidine metabolism; UMP biosynthesis via salvage pathway; UMP from uridine: step 1/1. In terms of biological role, catalyzes the conversion of uridine into uridine monophosphate and cytidine into cytidine monophosphate in the pyrimidine salvage pathway. The sequence is that of Uridine-cytidine kinase D (udkD) from Dictyostelium discoideum (Social amoeba).